The sequence spans 402 residues: Digeranylgeranylglycerophospholipid reductase (402 aa).

FAD-binding residues include G15, E34, C45, A46, G48, R99, A123, D280, G292, and I293.

It belongs to the geranylgeranyl reductase family. DGGGPL reductase subfamily. It depends on FAD as a cofactor.

The catalysed reaction is a 2,3-bis-O-phytanyl-sn-glycerol 1-phospholipid + 8 oxidized 2[4Fe-4S]-[ferredoxin] = a 2,3-bis-O-(geranylgeranyl)-sn-glycerol 1-phospholipid + 8 reduced 2[4Fe-4S]-[ferredoxin] + 16 H(+). It carries out the reaction 2,3-bis-O-(phytanyl)-sn-glycerol 1-phosphate + 8 oxidized 2[4Fe-4S]-[ferredoxin] = 2,3-bis-O-(geranylgeranyl)-sn-glycerol 1-phosphate + 8 reduced 2[4Fe-4S]-[ferredoxin] + 16 H(+). The enzyme catalyses a 2,3-bis-O-phytanyl-sn-glycerol 1-phospholipid + 8 A = a 2,3-bis-O-(geranylgeranyl)-sn-glycerol 1-phospholipid + 8 AH2. It catalyses the reaction CDP-2,3-bis-O-(geranylgeranyl)-sn-glycerol + 8 AH2 = CDP-2,3-bis-O-(phytanyl)-sn-glycerol + 8 A. The catalysed reaction is archaetidylserine + 8 AH2 = 2,3-bis-O-phytanyl-sn-glycero-3-phospho-L-serine + 8 A. It participates in membrane lipid metabolism; glycerophospholipid metabolism. Its function is as follows. Is involved in the reduction of 2,3-digeranylgeranylglycerophospholipids (unsaturated archaeols) into 2,3-diphytanylglycerophospholipids (saturated archaeols) in the biosynthesis of archaeal membrane lipids. Catalyzes the formation of archaetidic acid (2,3-di-O-phytanyl-sn-glyceryl phosphate) from 2,3-di-O-geranylgeranylglyceryl phosphate (DGGGP) via the hydrogenation of each double bond of the isoprenoid chains. Is also probably able to reduce double bonds of geranyl groups in CDP-2,3-bis-O-(geranylgeranyl)-sn-glycerol and archaetidylserine, thus acting at various stages in the biosynthesis of archaeal membrane lipids. The polypeptide is Digeranylgeranylglycerophospholipid reductase (Methanospirillum hungatei JF-1 (strain ATCC 27890 / DSM 864 / NBRC 100397 / JF-1)).